Here is a 213-residue protein sequence, read N- to C-terminus: Reticulon-3 (213 aa).

Positions 1–16 (MADTSGPQSSHISSSA) are enriched in polar residues. The disordered stretch occupies residues 1-20 (MADTSGPQSSHISSSAGEKG). In terms of domain architecture, Reticulon spans 25–213 (VQDLLYWRDV…LPGALKKKSE (189 aa)). The next 2 membrane-spanning stretches (helical) occupy residues 45-65 (MVLL…YLVL) and 154-174 (VFNG…APIV).

Homodimer.

The protein localises to the endoplasmic reticulum membrane. The protein resides in the golgi apparatus membrane. May be involved in membrane trafficking in the early secretory pathway. In Xenopus tropicalis (Western clawed frog), this protein is Reticulon-3 (rtn3).